A 172-amino-acid chain; its full sequence is RTX-I toxin-activating lysine-acyltransferase ApxIC (172 aa).

Residues histidine 24 and aspartate 93 contribute to the active site.

It belongs to the RTX toxin acyltransferase family. As to quaternary structure, homodimer.

It localises to the cytoplasm. The enzyme catalyses a fatty acyl-[ACP] + L-lysyl-[protein] = N(6)-(fatty acyl)-L-lysyl-[protein] + holo-[ACP] + H(+). In terms of biological role, protein-lysine acyltransferase that catalyzes fatty acylation of the protoxin, thereby converting it to the active toxin. The polypeptide is RTX-I toxin-activating lysine-acyltransferase ApxIC (Actinobacillus pleuropneumoniae (Haemophilus pleuropneumoniae)).